The sequence spans 278 residues: Phosphate import ATP-binding protein PstB (278 aa).

The ABC transporter domain occupies 32–273 (YETRDLNLWY…PSDKRTEDYI (242 aa)). 64-71 (GPSGCGKS) serves as a coordination point for ATP.

It belongs to the ABC transporter superfamily. Phosphate importer (TC 3.A.1.7) family. In terms of assembly, the complex is composed of two ATP-binding proteins (PstB), two transmembrane proteins (PstC and PstA) and a solute-binding protein (PstS).

The protein localises to the cell membrane. It carries out the reaction phosphate(out) + ATP + H2O = ADP + 2 phosphate(in) + H(+). Functionally, part of the ABC transporter complex PstSACB involved in phosphate import. Responsible for energy coupling to the transport system. This chain is Phosphate import ATP-binding protein PstB, found in Halalkalibacterium halodurans (strain ATCC BAA-125 / DSM 18197 / FERM 7344 / JCM 9153 / C-125) (Bacillus halodurans).